The primary structure comprises 58 residues: Dortoxin (58 aa).

One can recognise an LCN-type CS-alpha/beta domain in the interval 3–58 (VPGNYPLDKDGNTYTCLKLGENKDCQKVCKLHGVQYGYCYAFECWCKEYLDDKDSV). 3 disulfides stabilise this stretch: cysteine 18-cysteine 41, cysteine 27-cysteine 46, and cysteine 31-cysteine 48.

As to expression, expressed by the venom gland.

The protein localises to the secreted. Binds to sodium channels (Nav) and affects the channel activation process. In mice, causes hyperactivity that persists until death. The polypeptide is Dortoxin (Parabuthus transvaalicus (Transvaal thick-tailed scorpion)).